A 355-amino-acid polypeptide reads, in one-letter code: Beta-ketoacyl-[acyl-carrier-protein] synthase III (355 aa).

Active-site residues include C122 and H280. An ACP-binding region spans residues Q281 to R285. The active site involves N311.

It belongs to the thiolase-like superfamily. FabH family. As to quaternary structure, homodimer.

The protein resides in the cytoplasm. It carries out the reaction malonyl-[ACP] + acetyl-CoA + H(+) = 3-oxobutanoyl-[ACP] + CO2 + CoA. It participates in lipid metabolism; fatty acid biosynthesis. Catalyzes the condensation reaction of fatty acid synthesis by the addition to an acyl acceptor of two carbons from malonyl-ACP. Catalyzes the first condensation reaction which initiates fatty acid synthesis and may therefore play a role in governing the total rate of fatty acid production. Possesses both acetoacetyl-ACP synthase and acetyl transacylase activities. Its substrate specificity determines the biosynthesis of branched-chain and/or straight-chain of fatty acids. This Kocuria rhizophila (strain ATCC 9341 / DSM 348 / NBRC 103217 / DC2201) protein is Beta-ketoacyl-[acyl-carrier-protein] synthase III.